We begin with the raw amino-acid sequence, 104 residues long: Large ribosomal subunit protein uL24 (104 aa).

Belongs to the universal ribosomal protein uL24 family. Part of the 50S ribosomal subunit.

Its function is as follows. One of two assembly initiator proteins, it binds directly to the 5'-end of the 23S rRNA, where it nucleates assembly of the 50S subunit. One of the proteins that surrounds the polypeptide exit tunnel on the outside of the subunit. This chain is Large ribosomal subunit protein uL24, found in Proteus mirabilis (strain HI4320).